We begin with the raw amino-acid sequence, 534 residues long: Peptide chain release factor 3 (534 aa).

The tr-type G domain maps to 9–278; the sequence is SRRRTFAIIS…FFVEHAPPPQ (270 aa). GTP contacts are provided by residues 18 to 25, 86 to 90, and 140 to 143; these read SHPDAGKT, DTPGH, and NKLD.

This sequence belongs to the TRAFAC class translation factor GTPase superfamily. Classic translation factor GTPase family. PrfC subfamily.

It is found in the cytoplasm. Its function is as follows. Increases the formation of ribosomal termination complexes and stimulates activities of RF-1 and RF-2. It binds guanine nucleotides and has strong preference for UGA stop codons. It may interact directly with the ribosome. The stimulation of RF-1 and RF-2 is significantly reduced by GTP and GDP, but not by GMP. The chain is Peptide chain release factor 3 from Stenotrophomonas maltophilia (strain R551-3).